A 341-amino-acid polypeptide reads, in one-letter code: GTPase Obg (341 aa).

An Obg domain is found at 1–159 (MKFLDQAKVY…RTLWLRLKLI (159 aa)). One can recognise an OBG-type G domain in the interval 160-327 (ADAGLIGLPN…MLRAGAHMIE (168 aa)). Residues 166–173 (GLPNAGKS), 191–195 (FTTLY), 212–215 (DIPG), 279–282 (SQID), and 308–310 (SAV) each bind GTP. Positions 173 and 193 each coordinate Mg(2+).

It belongs to the TRAFAC class OBG-HflX-like GTPase superfamily. OBG GTPase family. In terms of assembly, monomer. Requires Mg(2+) as cofactor.

Its subcellular location is the cytoplasm. An essential GTPase which binds GTP, GDP and possibly (p)ppGpp with moderate affinity, with high nucleotide exchange rates and a fairly low GTP hydrolysis rate. Plays a role in control of the cell cycle, stress response, ribosome biogenesis and in those bacteria that undergo differentiation, in morphogenesis control. The sequence is that of GTPase Obg from Bartonella quintana (strain Toulouse) (Rochalimaea quintana).